The chain runs to 294 residues: N-acetylmuramic acid 6-phosphate etherase (294 aa).

The SIS domain maps to 54–217 (VIKSFEEEGR…STASMIGVGK (164 aa)). E82 acts as the Proton donor in catalysis. E113 is an active-site residue.

It belongs to the GCKR-like family. MurNAc-6-P etherase subfamily. In terms of assembly, homodimer.

The catalysed reaction is N-acetyl-D-muramate 6-phosphate + H2O = N-acetyl-D-glucosamine 6-phosphate + (R)-lactate. It participates in amino-sugar metabolism; N-acetylmuramate degradation. Functionally, specifically catalyzes the cleavage of the D-lactyl ether substituent of MurNAc 6-phosphate, producing GlcNAc 6-phosphate and D-lactate. This chain is N-acetylmuramic acid 6-phosphate etherase, found in Bacillus cereus (strain G9842).